Reading from the N-terminus, the 464-residue chain is uncharacterized protein (464 aa).

Disordered stretches follow at residues 290–374 (YRKQ…ERPK) and 445–464 (ETDDEDEENQYSEAEKPLEE). Residues 293-302 (QQQWQQQQQQ) are compositionally biased toward low complexity. Residues 303 to 318 (RKVKTPIKKQEAKKKA) show a composition bias toward basic residues. Over residues 352-367 (DMKQQQQMEKGTTSKQ) the composition is skewed to polar residues. Positions 445-454 (ETDDEDEENQ) are enriched in acidic residues.

This is an uncharacterized protein from Macaca fascicularis (Crab-eating macaque).